The primary structure comprises 467 residues: Hydroxymethylglutaryl-CoA synthase erg13A (467 aa).

(3S)-3-hydroxy-3-methylglutaryl-CoA is bound at residue Ala35. Glu86 functions as the Proton donor/acceptor in the catalytic mechanism. The (3S)-3-hydroxy-3-methylglutaryl-CoA site is built by Cys118, Thr160, Ser209, His259, Lys268, Asn334, and Ser368. The active-site Acyl-thioester intermediate is the Cys118. His259 acts as the Proton donor/acceptor in catalysis.

It belongs to the thiolase-like superfamily. HMG-CoA synthase family.

The catalysed reaction is acetoacetyl-CoA + acetyl-CoA + H2O = (3S)-3-hydroxy-3-methylglutaryl-CoA + CoA + H(+). It participates in metabolic intermediate biosynthesis; (R)-mevalonate biosynthesis; (R)-mevalonate from acetyl-CoA: step 2/3. Functionally, hydroxymethylglutaryl-CoA synthase; part of the first module of ergosterol biosynthesis pathway that includes the early steps of the pathway, conserved across all eukaryotes, and which results in the formation of mevalonate from acetyl-coenzyme A (acetyl-CoA). Erg13A and erg13B condense acetyl-CoA with acetoacetyl-CoA to form hydroxymethylglutaryl-CoA (HMG-CoA). The first module starts with the action of the cytosolic acetyl-CoA acetyltransferase erg10B that catalyzes the formation of acetoacetyl-CoA. The hydroxymethylglutaryl-CoA synthases erg13A and erg13B then condense acetyl-CoA with acetoacetyl-CoA to form HMG-CoA. The rate-limiting step of the early module is the reduction to mevalonate by the 3-hydroxy-3-methylglutaryl-coenzyme A (HMG-CoA) reductases hmg1 and hmg2. Mevalonate is also a precursor for the extracellular siderophore triacetylfusarinine C (TAFC). The protein is Hydroxymethylglutaryl-CoA synthase erg13A of Aspergillus fumigatus (strain ATCC MYA-4609 / CBS 101355 / FGSC A1100 / Af293) (Neosartorya fumigata).